An 883-amino-acid chain; its full sequence is N,N'-diacetylchitobiase (883 aa).

A signal peptide spans 1 to 17; it reads MLKHSLIAASVITTLAG. A lipid anchor (N-palmitoyl cysteine) is attached at Cys-18. Cys-18 carries S-diacylglycerol cysteine lipidation. 3 disulfides stabilise this stretch: Cys-54-Cys-64, Cys-394-Cys-402, and Cys-502-Cys-577. Glu-537 acts as the Proton donor in catalysis.

The protein belongs to the glycosyl hydrolase 20 family. In terms of processing, this protein is probably a lipoprotein, its processing is inhibited by globomycin.

Its subcellular location is the cell outer membrane. The enzyme catalyses Hydrolysis of terminal non-reducing N-acetyl-D-hexosamine residues in N-acetyl-beta-D-hexosaminides.. The protein operates within glycan degradation; chitin degradation. Its function is as follows. Hydrolysis of terminal, non-reducing N-acetyl-beta-D-glucosamine residues in chitobiose and higher analogs, and in glycoproteins. The polypeptide is N,N'-diacetylchitobiase (chb) (Vibrio harveyi (Beneckea harveyi)).